A 187-amino-acid polypeptide reads, in one-letter code: UPF0301 protein Shewmr7_1270 (187 aa).

Belongs to the UPF0301 (AlgH) family.

The polypeptide is UPF0301 protein Shewmr7_1270 (Shewanella sp. (strain MR-7)).